A 255-amino-acid chain; its full sequence is Eukaryotic translation initiation factor 3 subunit J (255 aa).

Acidic residues-rich tracts occupy residues 1 to 16 (MAENDSWDADDFEAED) and 34 to 53 (EGEDEEEDVKDNWDDEEEAQ). A disordered region spans residues 1-107 (MAENDSWDAD…SSNLPEITPE (107 aa)). Residues 54-95 (DATKQEPQKTELKVPEKKKLQEKIKEKENLQKKRKEELKKQA) are compositionally biased toward basic and acidic residues. A coiled-coil region spans residues 69–131 (EKKKLQEKIK…DSDLELAKEA (63 aa)).

It belongs to the eIF-3 subunit J family. As to quaternary structure, component of the eukaryotic translation initiation factor 3 (eIF-3) complex, which is composed of 13 subunits: eif3a, eif3b, eif3c, eif3d, eif3e, eif3f, eif3g, eif3h, eif3i, eif3j, eif3k, eif3l and eif3m.

It localises to the cytoplasm. In terms of biological role, component of the eukaryotic translation initiation factor 3 (eIF-3) complex, which is involved in protein synthesis of a specialized repertoire of mRNAs and, together with other initiation factors, stimulates binding of mRNA and methionyl-tRNAi to the 40S ribosome. The eIF-3 complex specifically targets and initiates translation of a subset of mRNAs involved in cell proliferation. The protein is Eukaryotic translation initiation factor 3 subunit J (eif3j) of Xenopus laevis (African clawed frog).